The chain runs to 505 residues: Cholesteryl ester transfer protein (505 aa).

The N-terminal stretch at 1–24 is a signal peptide; the sequence is MLWAGGMRLGMARILLMLVHAAAA. 2 N-linked (GlcNAc...) asparagine glycosylation sites follow: Asn68 and Asn114. Cys169 and Cys210 are joined by a disulfide. Residues Asn266, Asn344, and Asn422 are each glycosylated (N-linked (GlcNAc...) asparagine).

It belongs to the BPI/LBP/Plunc superfamily. BPI/LBP family. In terms of tissue distribution, highly expressed in liver brain, heart, and spleen. Secreted in plasma.

The protein resides in the secreted. The enzyme catalyses cholesteryl (9Z-octadecenoate)(in) = cholesteryl (9Z-octadecenoate)(out). It carries out the reaction 1,2,3-tri-(9Z-octadecenoyl)-glycerol(in) = 1,2,3-tri-(9Z-octadecenoyl)-glycerol(out). It catalyses the reaction cholesteryl (9Z,12Z)-octadecadienoate(in) = cholesteryl (9Z,12Z)-octadecadienoate(out). Its function is as follows. Involved in the transfer of neutral lipids, including cholesteryl ester and triglyceride, among lipoprotein particles. Allows the net movement of cholesteryl ester from high density lipoproteins/HDL to triglyceride-rich very low density lipoproteins/VLDL, and the equimolar transport of triglyceride from VLDL to HDL. Regulates the reverse cholesterol transport, by which excess cholesterol is removed from peripheral tissues and returned to the liver for elimination. The sequence is that of Cholesteryl ester transfer protein from Gallus gallus (Chicken).